Here is a 132-residue protein sequence, read N- to C-terminus: Small ribosomal subunit protein uS11 (132 aa).

This sequence belongs to the universal ribosomal protein uS11 family. In terms of assembly, part of the 30S ribosomal subunit. Interacts with proteins S7 and S18. Binds to IF-3.

Its function is as follows. Located on the platform of the 30S subunit, it bridges several disparate RNA helices of the 16S rRNA. Forms part of the Shine-Dalgarno cleft in the 70S ribosome. This chain is Small ribosomal subunit protein uS11, found in Cupriavidus pinatubonensis (strain JMP 134 / LMG 1197) (Cupriavidus necator (strain JMP 134)).